The following is a 161-amino-acid chain: Lipoprotein signal peptidase (161 aa).

3 helical membrane passes run 4–24, 61–81, and 87–107; these read LLVVYFLISALLVGLDQWSKY, KMIFFYVITVIVSVVIIYLLI, and SIWYSVGLSFVLAGAIGNFID. Residues D116 and D132 contribute to the active site. The helical transmembrane segment at 127-147 threads the bilayer; the sequence is IFNVADSTLVVGVICIFIYLI.

Belongs to the peptidase A8 family.

It localises to the cell membrane. The enzyme catalyses Release of signal peptides from bacterial membrane prolipoproteins. Hydrolyzes -Xaa-Yaa-Zaa-|-(S,diacylglyceryl)Cys-, in which Xaa is hydrophobic (preferably Leu), and Yaa (Ala or Ser) and Zaa (Gly or Ala) have small, neutral side chains.. It participates in protein modification; lipoprotein biosynthesis (signal peptide cleavage). Functionally, this protein specifically catalyzes the removal of signal peptides from prolipoproteins. The chain is Lipoprotein signal peptidase from Enterococcus faecalis (strain ATCC 700802 / V583).